The following is a 436-amino-acid chain: GTPase Obg (436 aa).

Positions 2-160 constitute an Obg domain; it reads SMFLDTAKIQ…RELLLELKVL (159 aa). The OBG-type G domain maps to 161 to 338; that stretch reads ADVGLVGFPS…LLDATAELLD (178 aa). Residues 167–174, 192–196, 214–217, 284–287, and 319–321 contribute to the GTP site; these read GFPSVGKS, FTTIV, DLPG, NKMD, and SSL. S174 and T194 together coordinate Mg(2+). In terms of domain architecture, OCT spans 358–436; it reads GFDEEAPAFE…IGKFEFEFVD (79 aa).

It belongs to the TRAFAC class OBG-HflX-like GTPase superfamily. OBG GTPase family. In terms of assembly, monomer. Mg(2+) is required as a cofactor.

The protein localises to the cytoplasm. Functionally, an essential GTPase which binds GTP, GDP and possibly (p)ppGpp with moderate affinity, with high nucleotide exchange rates and a fairly low GTP hydrolysis rate. Plays a role in control of the cell cycle, stress response, ribosome biogenesis and in those bacteria that undergo differentiation, in morphogenesis control. The chain is GTPase Obg from Streptococcus sanguinis (strain SK36).